A 120-amino-acid chain; its full sequence is Large ribosomal subunit protein uL18 (120 aa).

The protein belongs to the universal ribosomal protein uL18 family. In terms of assembly, part of the 50S ribosomal subunit; part of the 5S rRNA/L5/L18/L25 subcomplex. Contacts the 5S and 23S rRNAs.

Functionally, this is one of the proteins that bind and probably mediate the attachment of the 5S RNA into the large ribosomal subunit, where it forms part of the central protuberance. The polypeptide is Large ribosomal subunit protein uL18 (Methylobacterium sp. (strain 4-46)).